A 550-amino-acid chain; its full sequence is MAGKEIKYSTKAREAMLAGVRTLADAVAVTLGPRGRNVVIEKSWGSPTVTKDGVTVAKEIELEDKFENMGAQMVKEVASKTSDTAGDGTTTATVLARAIYEEGQKLVAAGNNPMAIKRGIDKACEVAVKELAGMSKPTKNQREIAQVGTISANSDETIGNIIAEAMEKVGKEGVITVEEAKSMDTTLDVVEGMQFDRGYLSPYFVTDAEKMVVSLENAYILINEKKLSNMKELLPILEQTAKAGRPLLIIAEDIEGEALATLVVNKLRGTLNVAAVKAPGFGDRRKAMLEDIATLTGGQVVSEDVGINLEGITLGDLGHAKRITIDKDNTTIVDGAGKKADIEGRVKQIRAQIEDTTSDYDREKLQERLAKLVGGVAVINVGAATETEMKEKKARVEDALNATRAAVEEGVLPGGGVALVRCLDALSKIKIKSEEKLGVKVVMRAIEEPLRRIANNAGVEGSVVIEKVKNETGSFGYNAATGDYGDLIAAGVIDPTKVVRFALQNACSVASVMLTTEAMIAEKPSKEEPAAMPGGGMGGMGGMGGMGGMM.

Residues 30–33, K51, 87–91, G415, 478–480, and D494 contribute to the ATP site; these read TLGP, DGTTT, and NAA.

Belongs to the chaperonin (HSP60) family. In terms of assembly, forms a cylinder of 14 subunits composed of two heptameric rings stacked back-to-back. Interacts with the co-chaperonin GroES.

The protein localises to the cytoplasm. It catalyses the reaction ATP + H2O + a folded polypeptide = ADP + phosphate + an unfolded polypeptide.. Functionally, together with its co-chaperonin GroES, plays an essential role in assisting protein folding. The GroEL-GroES system forms a nano-cage that allows encapsulation of the non-native substrate proteins and provides a physical environment optimized to promote and accelerate protein folding. This Desulfosudis oleivorans (strain DSM 6200 / JCM 39069 / Hxd3) (Desulfococcus oleovorans) protein is Chaperonin GroEL.